A 431-amino-acid chain; its full sequence is Serine--tRNA ligase (431 aa).

236–238 (TAE) contributes to the L-serine binding site. An ATP-binding site is contributed by 267–269 (RSE). Glu290 serves as a coordination point for L-serine. 354–357 (EISS) contacts ATP. Position 389 (Ser389) interacts with L-serine.

This sequence belongs to the class-II aminoacyl-tRNA synthetase family. Type-1 seryl-tRNA synthetase subfamily. In terms of assembly, homodimer. The tRNA molecule binds across the dimer.

The protein resides in the cytoplasm. It carries out the reaction tRNA(Ser) + L-serine + ATP = L-seryl-tRNA(Ser) + AMP + diphosphate + H(+). The enzyme catalyses tRNA(Sec) + L-serine + ATP = L-seryl-tRNA(Sec) + AMP + diphosphate + H(+). It functions in the pathway aminoacyl-tRNA biosynthesis; selenocysteinyl-tRNA(Sec) biosynthesis; L-seryl-tRNA(Sec) from L-serine and tRNA(Sec): step 1/1. Its function is as follows. Catalyzes the attachment of serine to tRNA(Ser). Is also able to aminoacylate tRNA(Sec) with serine, to form the misacylated tRNA L-seryl-tRNA(Sec), which will be further converted into selenocysteinyl-tRNA(Sec). This is Serine--tRNA ligase from Janthinobacterium sp. (strain Marseille) (Minibacterium massiliensis).